Consider the following 130-residue polypeptide: Small ribosomal subunit protein uS11c (130 aa).

It belongs to the universal ribosomal protein uS11 family. In terms of assembly, part of the 30S ribosomal subunit.

It is found in the plastid. The protein localises to the chloroplast. The chain is Small ribosomal subunit protein uS11c from Pinus thunbergii (Japanese black pine).